We begin with the raw amino-acid sequence, 249 residues long: tRNA (guanine-N(1)-)-methyltransferase (249 aa).

Residues Gly112 and 132 to 137 (LGDFVL) contribute to the S-adenosyl-L-methionine site.

Belongs to the RNA methyltransferase TrmD family. In terms of assembly, homodimer.

It is found in the cytoplasm. It catalyses the reaction guanosine(37) in tRNA + S-adenosyl-L-methionine = N(1)-methylguanosine(37) in tRNA + S-adenosyl-L-homocysteine + H(+). Its function is as follows. Specifically methylates guanosine-37 in various tRNAs. The sequence is that of tRNA (guanine-N(1)-)-methyltransferase from Geobacter sp. (strain M21).